Consider the following 265-residue polypeptide: Triosephosphate isomerase (265 aa).

8–10 (NWK) provides a ligand contact to substrate. Catalysis depends on histidine 103, which acts as the Electrophile. Glutamate 182 serves as the catalytic Proton acceptor. Substrate is bound by residues glycine 188, serine 226, and 247–248 (GG).

This sequence belongs to the triosephosphate isomerase family. As to quaternary structure, homodimer.

The protein resides in the cytoplasm. The catalysed reaction is D-glyceraldehyde 3-phosphate = dihydroxyacetone phosphate. Its pathway is carbohydrate biosynthesis; gluconeogenesis. The protein operates within carbohydrate degradation; glycolysis; D-glyceraldehyde 3-phosphate from glycerone phosphate: step 1/1. Its function is as follows. Involved in the gluconeogenesis. Catalyzes stereospecifically the conversion of dihydroxyacetone phosphate (DHAP) to D-glyceraldehyde-3-phosphate (G3P). This is Triosephosphate isomerase from Psychrobacter sp. (strain PRwf-1).